The chain runs to 143 residues: Myocilin opposite strand protein (143 aa).

The tract at residues 65 to 111 (MATRDETITKKSGEGEEMLPSMGMDHESPSKAHLMVPPAPPPSPADA) is disordered. A compositionally biased stretch (basic and acidic residues) spans 66-78 (ATRDETITKKSGE).

This chain is Myocilin opposite strand protein, found in Mus musculus (Mouse).